The primary structure comprises 166 residues: Phosphodiesterase MJ0936 (166 aa).

7 residues coordinate Mn(2+): Asp8, His10, Asp36, Asn59, His97, His120, and His122. Residues Asp8, His10, Asp36, Asn59, His97, His120, and His122 each coordinate Ni(2+).

Belongs to the metallophosphoesterase superfamily. YfcE family. In terms of assembly, monomer. Ni(2+) serves as cofactor. Mn(2+) is required as a cofactor.

With respect to regulation, competitively inhibited by phosphate. In terms of biological role, shows phosphodiesterase activity. Hydrolyzes phosphodiesters bonds in the artificial chromogenic substrates bis-p-nitrophenyl phosphate (bis-pNPP), and less efficiently thymidine 5'-monophosphate p-nitrophenyl ester (pNP-TMP) and p-nitrophenylphosphorylcholine (pNPPC). No catalytic activity was found toward cAMP or cGMP, nucleotides or phospholipase substrates such as phosphatidylcholine. The physiological substrate is unknown. This Methanocaldococcus jannaschii (strain ATCC 43067 / DSM 2661 / JAL-1 / JCM 10045 / NBRC 100440) (Methanococcus jannaschii) protein is Phosphodiesterase MJ0936.